The sequence spans 105 residues: Cell division protein FtsB (105 aa).

Over 1–3 (MRI) the chain is Cytoplasmic. The chain crosses the membrane as a helical span at residues 4–21 (VIYSMLVLLIAIQYPLWL). Topologically, residues 22 to 105 (GKGGWLKVYE…DTAKASTVKQ (84 aa)) are periplasmic. A coiled-coil region spans residues 32–60 (MEKQVELQEAKNSLLALRNAKLEGDVKDL).

This sequence belongs to the FtsB family. As to quaternary structure, part of a complex composed of FtsB, FtsL and FtsQ.

It is found in the cell inner membrane. Its function is as follows. Essential cell division protein. May link together the upstream cell division proteins, which are predominantly cytoplasmic, with the downstream cell division proteins, which are predominantly periplasmic. This is Cell division protein FtsB from Polynucleobacter asymbioticus (strain DSM 18221 / CIP 109841 / QLW-P1DMWA-1) (Polynucleobacter necessarius subsp. asymbioticus).